Reading from the N-terminus, the 269-residue chain is Phosphate import ATP-binding protein PstB 1 (269 aa).

The ABC transporter domain maps to 16–255 (FTTQNLDIYY…DRTGKVFGDP (240 aa)). 48–55 (GPSGCGKS) serves as a coordination point for ATP.

The protein belongs to the ABC transporter superfamily. Phosphate importer (TC 3.A.1.7) family. As to quaternary structure, the complex is composed of two ATP-binding proteins (PstB), two transmembrane proteins (PstC and PstA) and a solute-binding protein (PstS).

It is found in the cell inner membrane. The enzyme catalyses phosphate(out) + ATP + H2O = ADP + 2 phosphate(in) + H(+). Part of the ABC transporter complex PstSACB involved in phosphate import. Responsible for energy coupling to the transport system. In Synechocystis sp. (strain ATCC 27184 / PCC 6803 / Kazusa), this protein is Phosphate import ATP-binding protein PstB 1.